The chain runs to 399 residues: Acetate kinase (399 aa).

Asn-10 contributes to the Mg(2+) binding site. Lys-17 is a binding site for ATP. Substrate is bound at residue Arg-91. Asp-148 acts as the Proton donor/acceptor in catalysis. ATP contacts are provided by residues 208 to 212 (HLGNG), 283 to 285 (DCR), and 331 to 335 (GIGEN). Glu-385 is a Mg(2+) binding site.

The protein belongs to the acetokinase family. As to quaternary structure, homodimer. Mg(2+) serves as cofactor. The cofactor is Mn(2+).

Its subcellular location is the cytoplasm. The catalysed reaction is acetate + ATP = acetyl phosphate + ADP. The protein operates within metabolic intermediate biosynthesis; acetyl-CoA biosynthesis; acetyl-CoA from acetate: step 1/2. In terms of biological role, catalyzes the formation of acetyl phosphate from acetate and ATP. Can also catalyze the reverse reaction. The chain is Acetate kinase from Shewanella sp. (strain ANA-3).